Reading from the N-terminus, the 546-residue chain is Chaperonin GroEL (546 aa).

ATP-binding positions include 30 to 33, lysine 51, 87 to 91, glycine 415, 479 to 481, and aspartate 495; these read TLGP, DGTTT, and NAA. Positions 526–546 are disordered; it reads KKDEPAMPAGGGMGGMGGMDF. Residues 534-546 show a composition bias toward gly residues; the sequence is AGGGMGGMGGMDF.

It belongs to the chaperonin (HSP60) family. In terms of assembly, forms a cylinder of 14 subunits composed of two heptameric rings stacked back-to-back. Interacts with the co-chaperonin GroES.

Its subcellular location is the cytoplasm. It carries out the reaction ATP + H2O + a folded polypeptide = ADP + phosphate + an unfolded polypeptide.. Functionally, together with its co-chaperonin GroES, plays an essential role in assisting protein folding. The GroEL-GroES system forms a nano-cage that allows encapsulation of the non-native substrate proteins and provides a physical environment optimized to promote and accelerate protein folding. In Xanthomonas euvesicatoria pv. vesicatoria (strain 85-10) (Xanthomonas campestris pv. vesicatoria), this protein is Chaperonin GroEL.